A 273-amino-acid polypeptide reads, in one-letter code: MNNRVHQGHLARKRFGQNFLNDQFVIDSIVSAINPQKGQAMVEIGPGLAALTEPVGERLDQLTVIELDRDLAARLQTHPFLGPKLTIYQQDAMTFNFGELAEKMGQPLRVFGNLPYNISTPLMFHLFSYTDAIADMHFMLQKEVVNRLVAGPNSKAYGRLSVMAQYYCNVIPVLEVPPSAFTPPPKVDSAVVRLVPHATMPHPVKDVRVLSRITTEAFNQRRKTIRNSLGNLFSVEVLTGMGLDPAMRAENISVAQYCQMANYLAENAPLQES.

6 residues coordinate S-adenosyl-L-methionine: Asn-18, Leu-20, Gly-45, Glu-66, Asp-91, and Asn-113.

Belongs to the class I-like SAM-binding methyltransferase superfamily. rRNA adenine N(6)-methyltransferase family. RsmA subfamily.

The protein resides in the cytoplasm. It carries out the reaction adenosine(1518)/adenosine(1519) in 16S rRNA + 4 S-adenosyl-L-methionine = N(6)-dimethyladenosine(1518)/N(6)-dimethyladenosine(1519) in 16S rRNA + 4 S-adenosyl-L-homocysteine + 4 H(+). Functionally, specifically dimethylates two adjacent adenosines (A1518 and A1519) in the loop of a conserved hairpin near the 3'-end of 16S rRNA in the 30S particle. May play a critical role in biogenesis of 30S subunits. In Shigella boydii serotype 18 (strain CDC 3083-94 / BS512), this protein is Ribosomal RNA small subunit methyltransferase A.